The following is a 367-amino-acid chain: Germination protease (367 aa).

Residues 1–15 constitute a propeptide that is removed on maturation; that stretch reads MKEPLDLSKYSVRTD.

Belongs to the peptidase A25 family. As to quaternary structure, homotetramer. Autoproteolytically processed. The inactive tetrameric zymogen termed p46 autoprocesses to a smaller form termed p41, which is active only during spore germination.

It carries out the reaction Endopeptidase action with P4 Glu or Asp, P1 preferably Glu &gt; Asp, P1' hydrophobic and P2' Ala.. In terms of biological role, initiates the rapid degradation of small, acid-soluble proteins during spore germination. The chain is Germination protease from Bacillus cereus (strain ATCC 10987 / NRS 248).